A 167-amino-acid polypeptide reads, in one-letter code: Putative N-acetylgalactosamine-6-phosphate deacetylase (167 aa).

This sequence belongs to the metallo-dependent hydrolases superfamily. NagA family.

It catalyses the reaction N-acetyl-D-galactosamine 6-phosphate + H2O = D-galactosamine 6-phosphate + acetate. This chain is Putative N-acetylgalactosamine-6-phosphate deacetylase (agaA), found in Escherichia coli (strain K12).